Reading from the N-terminus, the 571-residue chain is MRTSQYLLATQKETPSDAVVISHQLMLRAGMIRKLASGLYTWLPMGLRVMRKVEAIVREEMNAAGALEVLMPSTQPAELWQESGRWEEYGPELLRFKDRHGRDFCAGPTHEEVITDLARNELSSYKQLPLNLYQIQTKFRDEIRPRFGLMRGREFIMKDAYSFHADQASLQVTYDRMHQAYCNVFTRLGLKFRPVEADNGSIGGAGSHEFHVLAESGEDDIVFSNGSDYAANIEKAEAVPRETSRPAPAEELRLVDTPDTKTIAALVEKFNLPIEKTIKTLIVHAEEPGKLIALIIRGDHELNEIKAANQPGVASPLVMASDAELRDAIGAGAGSLGPLNLPLPIIIDRSVELMSDFGIGANIDDKHYFGVNWERDLPVPTVADLRNVVAGDPSPDGKGTLEIKRGIEVGHIFQLGNKYSKAMKCEVLGENGKPVTLEMGCYGIGVSRVVAAAIEQNNDANGIIWSDTLAPFQIALVPLRYETEQVREATDKLYSELTAAGFEVLLDDRDKKTSPGIKFADMELIGIPHRIVVSDRGLAEGNLEYKSRTEAEAQALPVADVLSFLQARIRR.

Belongs to the class-II aminoacyl-tRNA synthetase family. ProS type 1 subfamily. In terms of assembly, homodimer.

It localises to the cytoplasm. It catalyses the reaction tRNA(Pro) + L-proline + ATP = L-prolyl-tRNA(Pro) + AMP + diphosphate. Its function is as follows. Catalyzes the attachment of proline to tRNA(Pro) in a two-step reaction: proline is first activated by ATP to form Pro-AMP and then transferred to the acceptor end of tRNA(Pro). As ProRS can inadvertently accommodate and process non-cognate amino acids such as alanine and cysteine, to avoid such errors it has two additional distinct editing activities against alanine. One activity is designated as 'pretransfer' editing and involves the tRNA(Pro)-independent hydrolysis of activated Ala-AMP. The other activity is designated 'posttransfer' editing and involves deacylation of mischarged Ala-tRNA(Pro). The misacylated Cys-tRNA(Pro) is not edited by ProRS. The chain is Proline--tRNA ligase from Pseudomonas fluorescens (strain ATCC BAA-477 / NRRL B-23932 / Pf-5).